The sequence spans 292 residues: Acetylglutamate kinase (292 aa).

Residues 64-65, Arg86, and Asn190 each bind substrate; that span reads GG.

The protein belongs to the acetylglutamate kinase family. ArgB subfamily.

It localises to the cytoplasm. The enzyme catalyses N-acetyl-L-glutamate + ATP = N-acetyl-L-glutamyl 5-phosphate + ADP. The protein operates within amino-acid biosynthesis; L-arginine biosynthesis; N(2)-acetyl-L-ornithine from L-glutamate: step 2/4. Catalyzes the ATP-dependent phosphorylation of N-acetyl-L-glutamate. This Pelobacter propionicus (strain DSM 2379 / NBRC 103807 / OttBd1) protein is Acetylglutamate kinase.